The following is a 351-amino-acid chain: N-formyl peptide receptor 2 (351 aa).

The Extracellular segment spans residues 1 to 27; sequence METNFSTPLNEYEEVSYESAGYTVLRI. N-linked (GlcNAc...) asparagine glycosylation occurs at asparagine 4. A helical transmembrane segment spans residues 28-50; it reads LPLVVLGVTFVLGVLGNGLVIWV. Over 51–61 the chain is Cytoplasmic; it reads AGFRMTRTVTT. A helical transmembrane segment spans residues 62–83; that stretch reads ICYLNLALADFSFTATLPFLIV. The Extracellular segment spans residues 84–100; the sequence is SMAMGEKWPFGWFLCKL. Cysteines 98 and 176 form a disulfide. A helical transmembrane segment spans residues 101-121; it reads IHIVVDINLFGSVFLIGFIAL. Topologically, residues 122–140 are cytoplasmic; the sequence is DRCICVLHPVWAQNHRTVS. A helical membrane pass occupies residues 141–162; the sequence is LAMKVIVGPWILALVLTLPVFL. The Extracellular segment spans residues 163-205; it reads FLTTVTIPNGDTYCTFNFASWGGTPEERLKVAITMLTARGIIR. Residues 206–226 form a helical membrane-spanning segment; the sequence is FVIGFSLPMSIVAICYGLIAA. At 227-242 the chain is on the cytoplasmic side; the sequence is KIHKKGMIKSSRPLRV. The chain crosses the membrane as a helical span at residues 243 to 266; that stretch reads LTAVVASFFICWFPFQLVALLGTV. The Extracellular portion of the chain corresponds to 267-286; the sequence is WLKEMLFYGKYKIIDILVNP. A helical transmembrane segment spans residues 287–306; that stretch reads TSSLAFFNSCLNPMLYVFVG. Residues 307–351 lie on the Cytoplasmic side of the membrane; that stretch reads QDFRERLIHSLPTSLERALSEDSAPTNDTAANSASPPAETELQAM. The tract at residues 325–351 is disordered; it reads LSEDSAPTNDTAANSASPPAETELQAM. A compositionally biased stretch (polar residues) spans 329–341; sequence SAPTNDTAANSAS.

It belongs to the G-protein coupled receptor 1 family. Interacts with Amyloid-beta protein 42, product of APP; the interaction takes place at the cell surface and the complex is then rapidly internalized. As to quaternary structure, (Microbial infection) Interacts with Staphylococcus aureus protein SSL13; this interaction leads to the activation of neutrophils. In terms of tissue distribution, detected in lung, bone marrow, neutrophils, spleen and testis.

It localises to the cell membrane. Functionally, low affinity receptor for N-formyl-methionyl peptides, which are powerful neutrophil chemotactic factors. Binding of FMLP to the receptor causes activation of neutrophils. This response is mediated via a G-protein that activates a phosphatidylinositol-calcium second messenger system. The activation of LXA4R could result in an anti-inflammatory outcome counteracting the actions of pro-inflammatory signals such as LTB4 (leukotriene B4). Receptor for the chemokine-like protein FAM19A5, mediating FAM19A5-stimulated macrophage chemotaxis and the inhibitory effect on TNFSF11/RANKL-induced osteoclast differentiation. Acts as a receptor for humanin. The protein is N-formyl peptide receptor 2 (FPR2) of Homo sapiens (Human).